Reading from the N-terminus, the 201-residue chain is Ribonuclease HII (201 aa).

The RNase H type-2 domain occupies 10-200 (LIEAGCDEAG…LGDGQLELFS (191 aa)). A divalent metal cation contacts are provided by aspartate 16, glutamate 17, and aspartate 108.

Belongs to the RNase HII family. Mn(2+) serves as cofactor. The cofactor is Mg(2+).

It localises to the cytoplasm. It carries out the reaction Endonucleolytic cleavage to 5'-phosphomonoester.. Functionally, endonuclease that specifically degrades the RNA of RNA-DNA hybrids. This Bacteroides fragilis (strain YCH46) protein is Ribonuclease HII.